A 903-amino-acid chain; its full sequence is KAT8 regulatory NSL complex subunit 1-like protein (903 aa).

3 disordered regions span residues 319-343 (DSDA…DECN), 419-441 (MPKS…PSSP), and 652-676 (TECT…HRSE). Polar residues-rich tracts occupy residues 423-441 (PQGT…PSSP) and 652-661 (TECTSSYSPD). The PEHE domain occupies 748 to 862 (EIITPSWKEV…ESPKGKTIHW (115 aa)).

This chain is KAT8 regulatory NSL complex subunit 1-like protein (kansl1l), found in Xenopus tropicalis (Western clawed frog).